A 305-amino-acid polypeptide reads, in one-letter code: Aspartate carbamoyltransferase catalytic subunit (305 aa).

Carbamoyl phosphate-binding residues include Arg-56 and Thr-57. Lys-85 contributes to the L-aspartate binding site. The carbamoyl phosphate site is built by Arg-106, His-134, and Gln-137. Arg-167 and Arg-227 together coordinate L-aspartate. Residues Leu-266 and Pro-267 each contribute to the carbamoyl phosphate site.

It belongs to the aspartate/ornithine carbamoyltransferase superfamily. ATCase family. Heterooligomer of catalytic and regulatory chains.

It carries out the reaction carbamoyl phosphate + L-aspartate = N-carbamoyl-L-aspartate + phosphate + H(+). It functions in the pathway pyrimidine metabolism; UMP biosynthesis via de novo pathway; (S)-dihydroorotate from bicarbonate: step 2/3. Functionally, catalyzes the condensation of carbamoyl phosphate and aspartate to form carbamoyl aspartate and inorganic phosphate, the committed step in the de novo pyrimidine nucleotide biosynthesis pathway. This is Aspartate carbamoyltransferase catalytic subunit from Thermoplasma volcanium (strain ATCC 51530 / DSM 4299 / JCM 9571 / NBRC 15438 / GSS1).